The sequence spans 419 residues: UDP-N-acetylglucosamine 1-carboxyvinyltransferase 1 (419 aa).

A phosphoenolpyruvate-binding site is contributed by 22 to 23; that stretch reads KN. Arg-92 contacts UDP-N-acetyl-alpha-D-glucosamine. Residue Cys-116 is the Proton donor of the active site. A 2-(S-cysteinyl)pyruvic acid O-phosphothioketal modification is found at Cys-116. Residues 121–125, Asp-306, and Ile-328 each bind UDP-N-acetyl-alpha-D-glucosamine; that span reads RPIDL.

This sequence belongs to the EPSP synthase family. MurA subfamily.

It localises to the cytoplasm. The enzyme catalyses phosphoenolpyruvate + UDP-N-acetyl-alpha-D-glucosamine = UDP-N-acetyl-3-O-(1-carboxyvinyl)-alpha-D-glucosamine + phosphate. The protein operates within cell wall biogenesis; peptidoglycan biosynthesis. Cell wall formation. Adds enolpyruvyl to UDP-N-acetylglucosamine. This chain is UDP-N-acetylglucosamine 1-carboxyvinyltransferase 1, found in Streptococcus agalactiae serotype Ia (strain ATCC 27591 / A909 / CDC SS700).